The chain runs to 192 residues: Archaemetzincin (192 aa).

Position 137 (histidine 137) interacts with Zn(2+). The active-site Proton acceptor is the glutamate 138. 6 residues coordinate Zn(2+): histidine 141, histidine 147, cysteine 148, cysteine 153, cysteine 172, and cysteine 175.

It belongs to the peptidase M54 family. In terms of assembly, monomer. Zn(2+) serves as cofactor.

In terms of biological role, probable zinc metalloprotease whose natural substrate is unknown. In Pyrococcus furiosus (strain ATCC 43587 / DSM 3638 / JCM 8422 / Vc1), this protein is Archaemetzincin.